Consider the following 229-residue polypeptide: Large ribosomal subunit protein uL1c (229 aa).

The protein belongs to the universal ribosomal protein uL1 family. In terms of assembly, part of the 50S ribosomal subunit.

It localises to the plastid. It is found in the chloroplast. Functionally, binds directly to 23S rRNA. Might be involved in E site tRNA release (Potential). The polypeptide is Large ribosomal subunit protein uL1c (rpl1) (Pyropia yezoensis (Susabi-nori)).